Consider the following 165-residue polypeptide: Putative pre-16S rRNA nuclease (165 aa).

This sequence belongs to the YqgF nuclease family.

The protein resides in the cytoplasm. In terms of biological role, could be a nuclease involved in processing of the 5'-end of pre-16S rRNA. The sequence is that of Putative pre-16S rRNA nuclease from Beijerinckia indica subsp. indica (strain ATCC 9039 / DSM 1715 / NCIMB 8712).